Consider the following 1295-residue polypeptide: Phosphoribosylformylglycinamidine synthase (1295 aa).

The tract at residues 302-327 is disordered; sequence APFSGAATGSGGEIRDEGATGRGSKP. ATP contacts are provided by residues 306–317 and A677; that span reads GAATGSGGEIRD. Residues D678, E717, N721, and D884 each contribute to the Mg(2+) site. Position 886 (S886) interacts with ATP. The region spanning 1042–1295 is the Glutamine amidotransferase type-1 domain; sequence MAILREQGVN…MFRNARVYLG (254 aa). The Nucleophile role is filled by C1135. Residues H1260 and E1262 contribute to the active site.

This sequence in the N-terminal section; belongs to the FGAMS family. In terms of assembly, monomer.

It localises to the cytoplasm. The enzyme catalyses N(2)-formyl-N(1)-(5-phospho-beta-D-ribosyl)glycinamide + L-glutamine + ATP + H2O = 2-formamido-N(1)-(5-O-phospho-beta-D-ribosyl)acetamidine + L-glutamate + ADP + phosphate + H(+). The protein operates within purine metabolism; IMP biosynthesis via de novo pathway; 5-amino-1-(5-phospho-D-ribosyl)imidazole from N(2)-formyl-N(1)-(5-phospho-D-ribosyl)glycinamide: step 1/2. Phosphoribosylformylglycinamidine synthase involved in the purines biosynthetic pathway. Catalyzes the ATP-dependent conversion of formylglycinamide ribonucleotide (FGAR) and glutamine to yield formylglycinamidine ribonucleotide (FGAM) and glutamate. The polypeptide is Phosphoribosylformylglycinamidine synthase (Pseudoalteromonas atlantica (strain T6c / ATCC BAA-1087)).